Consider the following 93-residue polypeptide: Acylphosphatase (93 aa).

The Acylphosphatase-like domain occupies 3–93 (KQQYFISGKV…FQFNNFKIYY (91 aa)). Active-site residues include R18 and N36.

The protein belongs to the acylphosphatase family.

It catalyses the reaction an acyl phosphate + H2O = a carboxylate + phosphate + H(+). The protein is Acylphosphatase (acyP) of Borrelia garinii subsp. bavariensis (strain ATCC BAA-2496 / DSM 23469 / PBi) (Borreliella bavariensis).